We begin with the raw amino-acid sequence, 396 residues long: F-box protein pof13 (396 aa).

The 50-residue stretch at 40–89 (KNSNLFLLNRDIWSLIINYLDAFDILRLMHSSRQFYYWLRKSAVDECCFN) folds into the F-box domain.

Part of a SCF (SKP1-cullin-F-box) protein ligase complex. Interacts with skp1.

It localises to the cytoplasm. It functions in the pathway protein modification; protein ubiquitination. This is F-box protein pof13 (pof13) from Schizosaccharomyces pombe (strain 972 / ATCC 24843) (Fission yeast).